A 1516-amino-acid chain; its full sequence is Alpha-2-macroglobulin homolog (1516 aa).

The first 26 residues, 1–26, serve as a signal peptide directing secretion; sequence MSNLRRFSRSLAVAALVLLPFAAVQA.

The protein belongs to the protease inhibitor I39 (alpha-2-macroglobulin) family. Bacterial alpha-2-macroglobulin subfamily.

In Pseudomonas aeruginosa (strain ATCC 15692 / DSM 22644 / CIP 104116 / JCM 14847 / LMG 12228 / 1C / PRS 101 / PAO1), this protein is Alpha-2-macroglobulin homolog.